The primary structure comprises 172 residues: Photosystem I assembly protein Ycf3 (172 aa).

TPR repeat units lie at residues 35–70 (AFTYYRDGAIMSAQSEGNYAEALQNYYEATRSEIDP), 74–107 (SYILYNIGLIHTSNGEHTKALEYYFQAIERNPFL), and 122–155 (GERAILRGDSEIAEAWFDQAAEYWKQAIGLTPGN).

The protein belongs to the Ycf3 family.

It localises to the plastid. Its subcellular location is the chloroplast thylakoid membrane. In terms of biological role, essential for the assembly of the photosystem I (PSI) complex. May act as a chaperone-like factor to guide the assembly of the PSI subunits. This Dioscorea elephantipes (Elephant's foot yam) protein is Photosystem I assembly protein Ycf3.